We begin with the raw amino-acid sequence, 482 residues long: UDP-N-acetylmuramoyl-L-alanyl-D-glutamate--2,6-diaminopimelate ligase (482 aa).

UDP-N-acetyl-alpha-D-muramoyl-L-alanyl-D-glutamate is bound by residues leucine 28 and serine 30. 108–114 (GTNGKTT) serves as a coordination point for ATP. Residues 150–151 (TT), serine 177, glutamine 183, and arginine 185 each bind UDP-N-acetyl-alpha-D-muramoyl-L-alanyl-D-glutamate. Lysine 217 carries the N6-carboxylysine modification. Residues arginine 372, 396–399 (DNPR), glycine 447, and glutamate 451 each bind meso-2,6-diaminopimelate. Residues 396 to 399 (DNPR) carry the Meso-diaminopimelate recognition motif motif.

This sequence belongs to the MurCDEF family. MurE subfamily. It depends on Mg(2+) as a cofactor. Post-translationally, carboxylation is probably crucial for Mg(2+) binding and, consequently, for the gamma-phosphate positioning of ATP.

The protein resides in the cytoplasm. It catalyses the reaction UDP-N-acetyl-alpha-D-muramoyl-L-alanyl-D-glutamate + meso-2,6-diaminopimelate + ATP = UDP-N-acetyl-alpha-D-muramoyl-L-alanyl-gamma-D-glutamyl-meso-2,6-diaminopimelate + ADP + phosphate + H(+). It participates in cell wall biogenesis; peptidoglycan biosynthesis. Its function is as follows. Catalyzes the addition of meso-diaminopimelic acid to the nucleotide precursor UDP-N-acetylmuramoyl-L-alanyl-D-glutamate (UMAG) in the biosynthesis of bacterial cell-wall peptidoglycan. The protein is UDP-N-acetylmuramoyl-L-alanyl-D-glutamate--2,6-diaminopimelate ligase of Aquifex aeolicus (strain VF5).